A 531-amino-acid chain; its full sequence is Outer dynein arm-docking complex subunit 4 (531 aa).

3 TPR repeats span residues 15–48, 50–82, and 83–116; these read FSTY…QPEE, NCLV…ENDF, and FKGL…RPEF. Positions 161–185 are disordered; sequence KQKAQVKVQKKDSKQQKKVDPERSQ. Basic and acidic residues predominate over residues 169-185; that stretch reads QKKDSKQQKKVDPERSQ. TPR repeat units lie at residues 275-307, 320-353, 360-393, 397-430, and 437-470; these read VKSL…VERW, GSLH…AEKY, SRAL…ANSS, TWLY…ADAA, and LNAC…ARLL. The tract at residues 487–531 is disordered; the sequence is KQGMEEQQESEQNNDENDNLRADGNTARDEEEEDVHVQRTEEDEG. Residues 492–503 show a composition bias toward acidic residues; it reads EQQESEQNNDEN. Residues 521–531 show a composition bias toward basic and acidic residues; it reads VHVQRTEEDEG.

Component of the outer dynein arm-docking complex. As to expression, in the mucociliary epithelium, specifically expressed in ciliated cells.

It localises to the cytoplasm. The protein resides in the cytoskeleton. It is found in the cilium axoneme. Component of the outer dynein arm-docking complex (ODA-DC) that mediates outer dynein arms (ODA) binding onto the doublet microtubule. Plays an essential role for the assembly of ODA-DC and in the docking of ODA in ciliary axoneme. Its function is as follows. Required for the docking of the outer dynein arm to cilia, hence plays an essential role in cilia motility. The sequence is that of Outer dynein arm-docking complex subunit 4 (odad4) from Xenopus laevis (African clawed frog).